We begin with the raw amino-acid sequence, 172 residues long: MLNRVVLVGRLTKDPELRYTPNGAAVATFTLAVNRTFTNQSGEREADFINCVTWRRQAENVANFLKKGSLAGVDGRLQTRNYENQQGQRVFVTEVQAESVQFLEPKNGGGSGSGGYNEGNSGGGQYFGGGQNDNPFGGNQNNQRRNQGNSFNDDPFANDGKPIDISDDDLPF.

The region spanning 1 to 104 (MLNRVVLVGR…VQAESVQFLE (104 aa)) is the SSB domain. Tyr82 carries the post-translational modification Phosphotyrosine. The tract at residues 103–172 (LEPKNGGGSG…IDISDDDLPF (70 aa)) is disordered. The segment covering 107 to 131 (NGGGSGSGGYNEGNSGGGQYFGGGQ) has biased composition (gly residues). The span at 132–149 (NDNPFGGNQNNQRRNQGN) shows a compositional bias: low complexity. Positions 167 to 172 (DDDLPF) match the Important for interaction with partner proteins motif.

Homotetramer. Interacts with proteins involved in DNA metabolism such as PriA, RecQ, RecG, RecS, DnaE, RarA, RecJ, RecO, SbcC, RecD2 (formerly YrrC), XseA and Ung. Interacts with RecQ via its 10 C-terminal residues. Interacts with RecD2. In terms of processing, phosphorylated by YwqD, which increases ssDNA affinity; dephosphorylated by YwqE.

It is found in the cytoplasm. It localises to the nucleoid. In terms of biological role, plays an important role in DNA replication, recombination and repair. Binds to single-stranded (ss)DNA and to an array of partner proteins to recruit them to their sites of action during DNA metabolism. Associates with oriC, this requires DnaA. SsbA binding to ssDNA prevents DnaB and DnaD individually from binding to DNA. Has a 20-fold higher affinity for ssDNA than SsbB; SsbA and DprA activate the homologous DNA strand exchange function of RecA-ATP. Enhances the activity of 3'-5' DNA helicase RecQ. This chain is Single-stranded DNA-binding protein A (ssbA), found in Bacillus subtilis (strain 168).